Here is a 671-residue protein sequence, read N- to C-terminus: Probable boron transporter 6 (671 aa).

At 1–37 the chain is on the cytoplasmic side; it reads MKSEGESGPFQGILRDIEGRRKCYKQDWIRGIKTGIR. A helical membrane pass occupies residues 38-58; sequence ILAPTCYIFFASSLPVVAFGE. Topologically, residues 59–77 are extracellular; the sequence is QLSKHTGGALSAVETLAST. A helical membrane pass occupies residues 78–98; sequence SICGIIHAIFGGQPLLIVGVA. Residues 99–123 lie on the Cytoplasmic side of the membrane; the sequence is EPTIIMYTYLYSFCISRPDIGRELY. The helical transmembrane segment at 124–144 threads the bilayer; it reads LAWVAWVCVWTSVLLILLSIF. The Extracellular segment spans residues 145–157; it reads NAGTIITRFTRIA. The chain crosses the membrane as a helical span at residues 158–178; the sequence is GELFGMLIAVLFLQEAIKGLI. Topologically, residues 179 to 195 are cytoplasmic; that stretch reads SEFHAPEIKNQETGKSH. The helical transmembrane segment at 196 to 216 threads the bilayer; the sequence is FLLIYANGLLAVIFSLGLLIT. Residues 217–235 lie on the Extracellular side of the membrane; that stretch reads ALKSRRAKSWKYGFGWLRS. A helical membrane pass occupies residues 236-256; the sequence is FIGDYGVPLMVLLWTALSYTV. At 257–291 the chain is on the cytoplasmic side; that stretch reads PSEVLPSVPRRLFCPLPWEPASLYHWTVVKDMGKV. The chain crosses the membrane as a helical span at residues 292–312; it reads PIMYILAAFIPGVMIAGLYFF. Residues 313 to 332 lie on the Extracellular side of the membrane; sequence DHSVASQMAQQKEFNLKNPS. A helical transmembrane segment spans residues 333–353; that stretch reads AYHYDIFLLGIITLICGLLGL. The Cytoplasmic segment spans residues 354-469; sequence PPSNGVLPQA…EQRVSNLLQS (116 aa). The chain crosses the membrane as a helical span at residues 470 to 490; the sequence is VLVGLTLLAVTVIKMIPSSVL. Over 491–557 the chain is Extracellular; sequence WGYFAYMAID…QLVYFLLCYG (67 aa). The helical transmembrane segment at 558–578 threads the bilayer; the sequence is MTWIPMAGIFFPALFFLLISI. Residues 579-671 are Cytoplasmic-facing; the sequence is REHLLPKLFD…EEKHVTFEPH (93 aa).

It belongs to the anion exchanger (TC 2.A.31.3) family.

The protein localises to the membrane. Probable boron transporter. Boron is essential for maintaining the integrity of plants cell walls. The sequence is that of Probable boron transporter 6 (BOR6) from Arabidopsis thaliana (Mouse-ear cress).